Consider the following 240-residue polypeptide: Large ribosomal subunit protein uL2 (240 aa).

A compositionally biased stretch (polar residues) spans 1–11 (MGKRLISQNRG). Disordered stretches follow at residues 1–28 (MGKR…KGAV) and 206–240 (GGGR…TGRK). Basic residues-rich tracts occupy residues 13–28 (GTPK…KGAV) and 224–240 (SPGR…TGRK).

Belongs to the universal ribosomal protein uL2 family. Part of the 50S ribosomal subunit. Forms a bridge to the 30S subunit in the 70S ribosome.

One of the primary rRNA binding proteins. Required for association of the 30S and 50S subunits to form the 70S ribosome, for tRNA binding and peptide bond formation. It has been suggested to have peptidyltransferase activity; this is somewhat controversial. Makes several contacts with the 16S rRNA in the 70S ribosome. This is Large ribosomal subunit protein uL2 from Methanococcus maripaludis (strain C7 / ATCC BAA-1331).